We begin with the raw amino-acid sequence, 249 residues long: Cysteine-rich secretory protein 1 (249 aa).

Residues 1–20 (MEIKHLLFLVAAACLLPVLS) form the signal peptide. An SCP domain is found at 45–175 (VNIHNTLRRG…SPRYFYVCHY (131 aa)). Asparagine 104 carries an N-linked (GlcNAc...) asparagine glycan. 5 disulfide bridges follow: cysteine 195/cysteine 202, cysteine 198/cysteine 207, cysteine 211/cysteine 244, cysteine 220/cysteine 238, and cysteine 229/cysteine 242. The ShKT domain occupies 211-244 (CIYYDEYTDCSLEVRFLGCNHSTPRMFCKATCLC). Residue asparagine 230 is glycosylated (N-linked (GlcNAc...) asparagine).

Belongs to the CRISP family. As to expression, expressed in all the regions of the epididymis except the caput and is not detected in the testis, prostate, seminal vesicle, and brain.

May have a role in sperm-egg fusion and maturation. The protein is Cysteine-rich secretory protein 1 (CRISP1) of Macaca mulatta (Rhesus macaque).